The sequence spans 392 residues: UPF0229 protein CPF_1540 (392 aa).

The tract at residues 75 to 100 (VTTGTGEERRGDRISSDKRKAISNNK) is disordered. Residues 80 to 94 (GEERRGDRISSDKRK) show a composition bias toward basic and acidic residues.

Belongs to the UPF0229 family.

The polypeptide is UPF0229 protein CPF_1540 (Clostridium perfringens (strain ATCC 13124 / DSM 756 / JCM 1290 / NCIMB 6125 / NCTC 8237 / Type A)).